We begin with the raw amino-acid sequence, 246 residues long: Ribonuclease 3 (246 aa).

An RNase III domain is found at 10 to 135 (LENFLTLNNI…FVAAIYLDLG (126 aa)). Residue E50 coordinates Mg(2+). The active site involves D54. D121 and E124 together coordinate Mg(2+). The active site involves E124. The DRBM domain occupies 161–230 (DPKSSFQEYI…ATRALETLKA (70 aa)).

Belongs to the ribonuclease III family. In terms of assembly, homodimer. It depends on Mg(2+) as a cofactor.

It is found in the cytoplasm. It catalyses the reaction Endonucleolytic cleavage to 5'-phosphomonoester.. Its function is as follows. Digests double-stranded RNA. Involved in the processing of primary rRNA transcript to yield the immediate precursors to the large and small rRNAs (23S and 16S). Processes some mRNAs, and tRNAs when they are encoded in the rRNA operon. Processes pre-crRNA and tracrRNA of type II CRISPR loci if present in the organism. The chain is Ribonuclease 3 from Mycoplasma mobile (strain ATCC 43663 / 163K / NCTC 11711) (Mesomycoplasma mobile).